Here is a 590-residue protein sequence, read N- to C-terminus: Aspartate--tRNA(Asp/Asn) ligase (590 aa).

Glu175 contributes to the L-aspartate binding site. The aspartate stretch occupies residues 199–202; it reads QQFK. Residues Arg221 and His452 each coordinate L-aspartate. 221 to 223 is a binding site for ATP; the sequence is RDE. Glu485 is a binding site for ATP. Arg492 provides a ligand contact to L-aspartate. ATP is bound at residue 537-540; it reads GIDR.

This sequence belongs to the class-II aminoacyl-tRNA synthetase family. Type 1 subfamily. Homodimer.

Its subcellular location is the cytoplasm. The catalysed reaction is tRNA(Asx) + L-aspartate + ATP = L-aspartyl-tRNA(Asx) + AMP + diphosphate. Functionally, aspartyl-tRNA synthetase with relaxed tRNA specificity since it is able to aspartylate not only its cognate tRNA(Asp) but also tRNA(Asn). Reaction proceeds in two steps: L-aspartate is first activated by ATP to form Asp-AMP and then transferred to the acceptor end of tRNA(Asp/Asn). This chain is Aspartate--tRNA(Asp/Asn) ligase, found in Dinoroseobacter shibae (strain DSM 16493 / NCIMB 14021 / DFL 12).